Here is a 947-residue protein sequence, read N- to C-terminus: Bifunctional glutamine synthetase adenylyltransferase/adenylyl-removing enzyme (947 aa).

The tract at residues 1–440 (MTPLSSPLSQ…VFNELIGDDE (440 aa)) is adenylyl removase. Residues 450–947 (SEPWREVWQD…ASWRKWLVAV (498 aa)) form an adenylyl transferase region.

This sequence belongs to the GlnE family. The cofactor is Mg(2+).

It catalyses the reaction [glutamine synthetase]-O(4)-(5'-adenylyl)-L-tyrosine + phosphate = [glutamine synthetase]-L-tyrosine + ADP. It carries out the reaction [glutamine synthetase]-L-tyrosine + ATP = [glutamine synthetase]-O(4)-(5'-adenylyl)-L-tyrosine + diphosphate. In terms of biological role, involved in the regulation of glutamine synthetase GlnA, a key enzyme in the process to assimilate ammonia. When cellular nitrogen levels are high, the C-terminal adenylyl transferase (AT) inactivates GlnA by covalent transfer of an adenylyl group from ATP to specific tyrosine residue of GlnA, thus reducing its activity. Conversely, when nitrogen levels are low, the N-terminal adenylyl removase (AR) activates GlnA by removing the adenylyl group by phosphorolysis, increasing its activity. The regulatory region of GlnE binds the signal transduction protein PII (GlnB) which indicates the nitrogen status of the cell. This is Bifunctional glutamine synthetase adenylyltransferase/adenylyl-removing enzyme from Salmonella paratyphi B (strain ATCC BAA-1250 / SPB7).